The sequence spans 365 residues: S-adenosylmethionine:tRNA ribosyltransferase-isomerase (365 aa).

The protein belongs to the QueA family. Monomer.

The protein resides in the cytoplasm. The catalysed reaction is 7-aminomethyl-7-carbaguanosine(34) in tRNA + S-adenosyl-L-methionine = epoxyqueuosine(34) in tRNA + adenine + L-methionine + 2 H(+). Its pathway is tRNA modification; tRNA-queuosine biosynthesis. Its function is as follows. Transfers and isomerizes the ribose moiety from AdoMet to the 7-aminomethyl group of 7-deazaguanine (preQ1-tRNA) to give epoxyqueuosine (oQ-tRNA). The chain is S-adenosylmethionine:tRNA ribosyltransferase-isomerase from Rickettsia conorii (strain ATCC VR-613 / Malish 7).